The sequence spans 187 residues: MKLVLGISGASGIPLALRFLEKLPKEIEVFVVASKNAHVVALEESNINLKNAMKDLRPSGTFFNEQDIHASIASGSYGIHKMAIIPASMDMVAKIAHGFGGDLISRSASVMLKEKRPLLIAPREMPLSAIMLENLLKLSHSNAIIAPPMMTYYTQSKTLEAMQDFLVGKWFDSLGIENDLYPRWGMN.

Residues 9–11 (GAS), S34, and R123 contribute to the FMN site. Dimethylallyl phosphate contacts are provided by Y153 and K169.

It belongs to the UbiX/PAD1 family.

The catalysed reaction is dimethylallyl phosphate + FMNH2 = prenylated FMNH2 + phosphate. In terms of biological role, flavin prenyltransferase that catalyzes the synthesis of the prenylated FMN cofactor (prenyl-FMN) for 4-hydroxy-3-polyprenylbenzoic acid decarboxylase UbiD. The prenyltransferase is metal-independent and links a dimethylallyl moiety from dimethylallyl monophosphate (DMAP) to the flavin N5 and C6 atoms of FMN. This is Flavin prenyltransferase UbiX from Helicobacter pylori (strain ATCC 700392 / 26695) (Campylobacter pylori).